The following is a 488-amino-acid chain: Coiled-coil domain-containing protein 77 (488 aa).

The interval 21-48 is disordered; it reads GVAVSGPTKRRGMADSLESTPLPSPEDR. Ser36 carries the post-translational modification Phosphoserine. Lys51 participates in a covalent cross-link: Glycyl lysine isopeptide (Lys-Gly) (interchain with G-Cter in SUMO2). 2 coiled-coil regions span residues 55-118 and 208-488; these read SKEL…QVCL and KESS…LRLC. The segment at 192–213 is disordered; that stretch reads FKADPKISKRRPSRERKESSEH.

This is Coiled-coil domain-containing protein 77 (CCDC77) from Homo sapiens (Human).